We begin with the raw amino-acid sequence, 908 residues long: Metabotropic glutamate receptor 8 (908 aa).

The first 33 residues, 1–33 (MVCEGKRLASCPCFFLLTAKFYWILTMMQRTHS), serve as a signal peptide directing secretion. At 34 to 583 (QEYAHSIRVD…IIKLEWHSPW (550 aa)) the chain is on the extracellular side. An intrachain disulfide couples cysteine 64 to cysteine 106. Asparagine 95 carries N-linked (GlcNAc...) asparagine glycosylation. L-glutamate contacts are provided by residues serine 156, 177–179 (AST), and tyrosine 227. 7 disulfide bridges follow: cysteine 246–cysteine 534, cysteine 369–cysteine 384, cysteine 424–cysteine 431, cysteine 516–cysteine 535, cysteine 520–cysteine 538, cysteine 541–cysteine 553, and cysteine 556–cysteine 569. Asparagine 298 is a glycosylation site (N-linked (GlcNAc...) asparagine). Residue aspartate 309 coordinates L-glutamate. Lysine 401 contributes to the L-glutamate binding site. Asparagine 452 and asparagine 480 each carry an N-linked (GlcNAc...) asparagine glycan. The N-linked (GlcNAc...) asparagine glycan is linked to asparagine 565. A helical membrane pass occupies residues 584-608 (AVVPVFIAILGIIATTFVIVTFVRY). The Cytoplasmic portion of the chain corresponds to 609-620 (NDTPIVRASGRE). Residues 621 to 641 (LSYVLLTGIFLCYSITFLMIA) form a helical membrane-spanning segment. The Extracellular portion of the chain corresponds to 642–647 (APDTII). Residues 648 to 668 (CSFRRIFLGLGMCFSYAALLT) traverse the membrane as a helical segment. Over 669–695 (KTNRIHRIFEQGKKSVTAPKFISPASQ) the chain is Cytoplasmic. The helical transmembrane segment at 696-716 (LVITFSLISVQLLGVFVWFVV) threads the bilayer. At 717–746 (DPPHTIIDYGEQRTLDPENARGVLKCDISD) the chain is on the extracellular side. The chain crosses the membrane as a helical span at residues 747–768 (LSLICSLGYSILLMVTCTVYAI). The Cytoplasmic portion of the chain corresponds to 769 to 781 (KTRGVPETFNEAK). A helical transmembrane segment spans residues 782 to 803 (PIGFTMYTTCIIWLAFIPIFFG). Residues 804 to 818 (TAQSAEKMYIQTTTL) are Extracellular-facing. A helical membrane pass occupies residues 819-843 (TVSMSLSASVSLGMLYMPKVYIIIF). Residues 844–908 (HPEQNVQKRK…TYISYSNHSI (65 aa)) lie on the Cytoplasmic side of the membrane. A Glycyl lysine isopeptide (Lys-Gly) (interchain with G-Cter in SUMO1) cross-link involves residue lysine 882.

It belongs to the G-protein coupled receptor 3 family. In terms of assembly, interacts with PICK1. Prominent expression in olfactory bulb, pontine gray, lateral reticular nucleus of the thalamus, and piriform cortex. Less abundant expression incerebral cortex, hippocampus, cerebellum, and mammillary body.

It is found in the cell membrane. Its function is as follows. G-protein coupled receptor for glutamate. Ligand binding causes a conformation change that triggers signaling via guanine nucleotide-binding proteins (G proteins) and modulates the activity of down-stream effectors. Signaling inhibits adenylate cyclase activity. This chain is Metabotropic glutamate receptor 8 (Grm8), found in Rattus norvegicus (Rat).